A 551-amino-acid chain; its full sequence is ETS domain-containing transcription factor ERF (551 aa).

Thr-3 and Thr-7 each carry phosphothreonine. Phosphoserine is present on residues Ser-20 and Ser-24. Residues 27 to 107 constitute a DNA-binding region (ETS); sequence IQLWHFILEL…KGKRFTYKFN (81 aa). 2 disordered regions span residues 130–169 and 184–304; these read QSAP…SSSS and GSVS…SHFS. A phosphoserine mark is found at Ser-185 and Ser-190. Positions 239-250 are enriched in pro residues; that stretch reads RGGPEPLSPFPV. Low complexity predominate over residues 251 to 268; it reads SPLAGPGSLLPPQLSPAL. Gly residues predominate over residues 289–301; that stretch reads SGGGGPSGSGGGS. The residue at position 327 (Ser-327) is a Phosphoserine. The disordered stretch occupies residues 342 to 476; sequence PQRPDKCPLP…KPEPGEAPGV (135 aa). Positions 348 to 361 are enriched in pro residues; it reads CPLPPMAPETPPVP. Positions 362-373 are enriched in low complexity; sequence SSASSSSSSSSS. The span at 404-413 shows a compositional bias: gly residues; it reads GGSGSGGLAE. Phosphoserine is present on residues Ser-433 and Ser-437. The span at 433–453 shows a compositional bias: acidic residues; it reads SEGESEEVEVTDISDEDEEDG. Phosphothreonine is present on Thr-443. Ser-446 carries the phosphoserine modification. Residues Lys-467, Lys-483, and Lys-514 each participate in a glycyl lysine isopeptide (Lys-Gly) (interchain with G-Cter in SUMO2) cross-link. The segment at 495–551 is disordered; it reads RLEGGGCLSGGPEDEGEDKKVRGDVGPGESGGPLTPRRVSSDLQHATAQLSLEHRDS. Thr-529 is subject to Phosphothreonine; by MAPK1. Residues Ser-534, Ser-535, and Ser-551 each carry the phosphoserine modification. Over residues 535–544 the composition is skewed to polar residues; it reads SDLQHATAQL.

This sequence belongs to the ETS family. Phosphorylated by multiple kinases including MAPK1/ERK2 at THR-529. Phosphorylation regulates the activity of ERF. In terms of tissue distribution, expressed along the osteogenic margins of the developing calvarial bones, in a similar distribution to that observed for the master osteogenic regulator RUNX2.

It is found in the nucleus. Functionally, potent transcriptional repressor that binds to the H1 element of the Ets2 promoter. May regulate other genes involved in cellular proliferation. Required for extraembryonic ectoderm differentiation, ectoplacental cone cavity closure, and chorioallantoic attachment. May be important for regulating trophoblast stem cell differentiation. This is ETS domain-containing transcription factor ERF (Erf) from Mus musculus (Mouse).